The sequence spans 467 residues: Congo red hypersensitive protein 2 (467 aa).

The first 23 residues, 1 to 23 (MAIVNSWLICLVSIFSFVVRVEA), serve as a signal peptide directing secretion. N28 is a glycosylation site (N-linked (GlcNAc...) asparagine). An intrachain disulfide couples C56 to C67. In terms of domain architecture, GH16 spans 63–280 (SHDSCMPVPI…WSGGEINWDA (218 aa)). Residue N96 is glycosylated (N-linked (GlcNAc...) asparagine). E166 acts as the Nucleophile in catalysis. Residue E170 is the Proton donor of the active site. E170 contacts chitin. Residues N190, N196, N233, and N237 are each glycosylated (N-linked (GlcNAc...) asparagine). W257 is a chitin binding site. An N-linked (GlcNAc...) asparagine glycan is attached at N261. T268 contributes to the chitin binding site. N-linked (GlcNAc...) asparagine glycosylation is found at N297 and N310. The disordered stretch occupies residues 337-444 (MDSDEGSGLD…SSSTSSMSGN (108 aa)). The segment covering 351-444 (ATTSSTQKSS…SSSTSSMSGN (94 aa)) has biased composition (low complexity). The GPI-anchor amidated asparagine moiety is linked to residue N445. Positions 446–467 (AGANVAANWRLTVLCVILGYVL) are cleaved as a propeptide — removed in mature form.

The protein belongs to the glycosyl hydrolase 16 family. CRH1 subfamily. In terms of processing, the GPI-anchor is attached to the protein in the endoplasmic reticulum and serves to target the protein to the cell surface. There, the glucosamine-inositol phospholipid moiety is cleaved off and the GPI-modified mannoprotein is covalently attached via its lipidless GPI glycan remnant to the 1,6-beta-glucan of the outer cell wall layer.

The protein localises to the secreted. It localises to the cell wall. It is found in the membrane. The enzyme catalyses Random endo-hydrolysis of N-acetyl-beta-D-glucosaminide (1-&gt;4)-beta-linkages in chitin and chitodextrins.. Functionally, dual chitinase/transglycosylase that plays a role in cell wall architecture. Chitinase and transglycosylase activities are coupled. Required for the polysaccharide cross-linking at the septa and the cell wall. More specifically, transfers chitin to both beta(1-3)- and beta(1-6)glucan in the cell wall. The minimal number of intact hexopyranose units required in the molecule of the acceptor oligosaccharide is two and the effectivity of the acceptor increased with the increasing length of its oligosaccharide chain. This chain is Congo red hypersensitive protein 2, found in Saccharomyces cerevisiae (strain ATCC 204508 / S288c) (Baker's yeast).